Here is a 219-residue protein sequence, read N- to C-terminus: Thiamine-phosphate synthase (219 aa).

4-amino-2-methyl-5-(diphosphooxymethyl)pyrimidine contacts are provided by residues 48 to 52 and Asn80; that span reads QLREK. Residues Asp81 and Asp100 each coordinate Mg(2+). Ser119 provides a ligand contact to 4-amino-2-methyl-5-(diphosphooxymethyl)pyrimidine. 2-[(2R,5Z)-2-carboxy-4-methylthiazol-5(2H)-ylidene]ethyl phosphate is bound at residue 145 to 147; the sequence is TPT. Position 148 (Lys148) interacts with 4-amino-2-methyl-5-(diphosphooxymethyl)pyrimidine. 2-[(2R,5Z)-2-carboxy-4-methylthiazol-5(2H)-ylidene]ethyl phosphate contacts are provided by residues Gly176 and 196-197; that span reads VS.

It belongs to the thiamine-phosphate synthase family. Mg(2+) serves as cofactor.

It catalyses the reaction 2-[(2R,5Z)-2-carboxy-4-methylthiazol-5(2H)-ylidene]ethyl phosphate + 4-amino-2-methyl-5-(diphosphooxymethyl)pyrimidine + 2 H(+) = thiamine phosphate + CO2 + diphosphate. The enzyme catalyses 2-(2-carboxy-4-methylthiazol-5-yl)ethyl phosphate + 4-amino-2-methyl-5-(diphosphooxymethyl)pyrimidine + 2 H(+) = thiamine phosphate + CO2 + diphosphate. The catalysed reaction is 4-methyl-5-(2-phosphooxyethyl)-thiazole + 4-amino-2-methyl-5-(diphosphooxymethyl)pyrimidine + H(+) = thiamine phosphate + diphosphate. The protein operates within cofactor biosynthesis; thiamine diphosphate biosynthesis; thiamine phosphate from 4-amino-2-methyl-5-diphosphomethylpyrimidine and 4-methyl-5-(2-phosphoethyl)-thiazole: step 1/1. Condenses 4-methyl-5-(beta-hydroxyethyl)thiazole monophosphate (THZ-P) and 2-methyl-4-amino-5-hydroxymethyl pyrimidine pyrophosphate (HMP-PP) to form thiamine monophosphate (TMP). The protein is Thiamine-phosphate synthase of Albidiferax ferrireducens (strain ATCC BAA-621 / DSM 15236 / T118) (Rhodoferax ferrireducens).